Consider the following 412-residue polypeptide: Allantoate amidohydrolase (412 aa).

Residues histidine 84, aspartate 95, glutamate 130, and histidine 193 each coordinate Zn(2+). Arginine 218, asparagine 278, and arginine 291 together coordinate allantoate. Histidine 385 contacts Zn(2+).

The protein belongs to the peptidase M20 family. As to quaternary structure, homodimer. It depends on Zn(2+) as a cofactor.

It localises to the cytoplasm. The enzyme catalyses allantoate + H2O + 2 H(+) = (S)-2-ureidoglycine + NH4(+) + CO2. The protein operates within nitrogen metabolism; (S)-allantoin degradation. Functionally, involved in the anaerobic nitrogen utilization via the assimilation of allantoin. Catalyzes specifically the hydrolysis of allantoate to yield CO2, NH3 and S-ureidoglycine, which is unstable and readily undergoes a second deamination by S-ureidoglycine aminohydrolase AllE to yield S-ureidoglycolate and NH3. In Bacillus subtilis (strain 168), this protein is Allantoate amidohydrolase.